A 555-amino-acid chain; its full sequence is Glucose-6-phosphate isomerase (555 aa).

E360 functions as the Proton donor in the catalytic mechanism. Catalysis depends on residues H391 and K519.

Belongs to the GPI family.

The protein localises to the cytoplasm. The enzyme catalyses alpha-D-glucose 6-phosphate = beta-D-fructose 6-phosphate. It functions in the pathway carbohydrate biosynthesis; gluconeogenesis. The protein operates within carbohydrate degradation; glycolysis; D-glyceraldehyde 3-phosphate and glycerone phosphate from D-glucose: step 2/4. Functionally, catalyzes the reversible isomerization of glucose-6-phosphate to fructose-6-phosphate. This is Glucose-6-phosphate isomerase from Acinetobacter baumannii (strain AB307-0294).